A 305-amino-acid polypeptide reads, in one-letter code: tRNA dimethylallyltransferase (305 aa).

Residue 8–15 (GPTAVGKT) coordinates ATP. Residue 10–15 (TAVGKT) participates in substrate binding. The interaction with substrate tRNA stretch occupies residues 33-36 (DSRQ).

The protein belongs to the IPP transferase family. In terms of assembly, monomer. Mg(2+) serves as cofactor.

It catalyses the reaction adenosine(37) in tRNA + dimethylallyl diphosphate = N(6)-dimethylallyladenosine(37) in tRNA + diphosphate. Functionally, catalyzes the transfer of a dimethylallyl group onto the adenine at position 37 in tRNAs that read codons beginning with uridine, leading to the formation of N6-(dimethylallyl)adenosine (i(6)A). This Thermotoga neapolitana (strain ATCC 49049 / DSM 4359 / NBRC 107923 / NS-E) protein is tRNA dimethylallyltransferase.